The following is a 657-amino-acid chain: Protein translocase subunit SecA 2 (657 aa).

ATP is bound by residues Gln-93, 111-115 (GEGKT), and Asp-531.

The protein belongs to the SecA family. As to quaternary structure, monomer and homodimer. Part of the essential Sec protein translocation apparatus which comprises SecA, SecYEG and auxiliary proteins SecDF. Other proteins may also be involved.

The protein resides in the cell inner membrane. The protein localises to the cytoplasm. The catalysed reaction is ATP + H2O + cellular proteinSide 1 = ADP + phosphate + cellular proteinSide 2.. Its function is as follows. Part of the Sec protein translocase complex. Interacts with the SecYEG preprotein conducting channel. Has a central role in coupling the hydrolysis of ATP to the transfer of proteins into and across the cell membrane, serving as an ATP-driven molecular motor driving the stepwise translocation of polypeptide chains across the membrane. The sequence is that of Protein translocase subunit SecA 2 from Rhodopirellula baltica (strain DSM 10527 / NCIMB 13988 / SH1).